The primary structure comprises 577 residues: Proline--tRNA ligase (577 aa).

Belongs to the class-II aminoacyl-tRNA synthetase family. ProS type 1 subfamily. In terms of assembly, homodimer.

It localises to the cytoplasm. The catalysed reaction is tRNA(Pro) + L-proline + ATP = L-prolyl-tRNA(Pro) + AMP + diphosphate. Catalyzes the attachment of proline to tRNA(Pro) in a two-step reaction: proline is first activated by ATP to form Pro-AMP and then transferred to the acceptor end of tRNA(Pro). As ProRS can inadvertently accommodate and process non-cognate amino acids such as alanine and cysteine, to avoid such errors it has two additional distinct editing activities against alanine. One activity is designated as 'pretransfer' editing and involves the tRNA(Pro)-independent hydrolysis of activated Ala-AMP. The other activity is designated 'posttransfer' editing and involves deacylation of mischarged Ala-tRNA(Pro). The misacylated Cys-tRNA(Pro) is not edited by ProRS. The polypeptide is Proline--tRNA ligase (Marinobacter nauticus (strain ATCC 700491 / DSM 11845 / VT8) (Marinobacter aquaeolei)).